The sequence spans 269 residues: Formamidopyrimidine-DNA glycosylase (269 aa).

The Schiff-base intermediate with DNA role is filled by Pro-2. The active-site Proton donor is Glu-3. Residue Lys-57 is the Proton donor; for beta-elimination activity of the active site. Residues His-90, Arg-109, and Lys-150 each contribute to the DNA site. The FPG-type zinc finger occupies 235 to 269 (QVYGRAGELCRRCGNVIEIAKHGQRSTFFCRHCQH). The active-site Proton donor; for delta-elimination activity is Arg-259.

Belongs to the FPG family. Monomer. It depends on Zn(2+) as a cofactor.

The enzyme catalyses Hydrolysis of DNA containing ring-opened 7-methylguanine residues, releasing 2,6-diamino-4-hydroxy-5-(N-methyl)formamidopyrimidine.. It carries out the reaction 2'-deoxyribonucleotide-(2'-deoxyribose 5'-phosphate)-2'-deoxyribonucleotide-DNA = a 3'-end 2'-deoxyribonucleotide-(2,3-dehydro-2,3-deoxyribose 5'-phosphate)-DNA + a 5'-end 5'-phospho-2'-deoxyribonucleoside-DNA + H(+). In terms of biological role, involved in base excision repair of DNA damaged by oxidation or by mutagenic agents. Acts as a DNA glycosylase that recognizes and removes damaged bases. Has a preference for oxidized purines, such as 7,8-dihydro-8-oxoguanine (8-oxoG). Has AP (apurinic/apyrimidinic) lyase activity and introduces nicks in the DNA strand. Cleaves the DNA backbone by beta-delta elimination to generate a single-strand break at the site of the removed base with both 3'- and 5'-phosphates. The protein is Formamidopyrimidine-DNA glycosylase of Yersinia enterocolitica serotype O:8 / biotype 1B (strain NCTC 13174 / 8081).